A 337-amino-acid polypeptide reads, in one-letter code: MEIQSNFSLKNYNTFGIEAKAKQFIAVHSVEELKTILKENKNEKKFILGGGSNMLLTKDIDALVIHIDLKGKEIIKEDDDFVWVESQAGETWHDFVLWTIDNNFGGLENMSLIPGNVGTTPVQNIGAYGTEIKDTFVSCNAINIETQETKTFTNAECNFGYRESIFKNEVKDQFIITSVIYKLTKRNHKINTSYGDILAELAKNNISEPTLKDVSNAVIAIRQSKLPDPKELGNSGSFFKNPILLKSDFEQIHKKFPEMKFYEVSETEVKVPAGWLIEQAGFKGKRFGDAGVHKNQALVLVNYGNATGQEILNVSKEVQKTVFETFGIKIEAEVNVI.

Residues 17–186 (IEAKAKQFIA…TSVIYKLTKR (170 aa)) enclose the FAD-binding PCMH-type domain. Residue Arg-162 is part of the active site. Ser-237 serves as the catalytic Proton donor. Residue Glu-333 is part of the active site.

It belongs to the MurB family. Requires FAD as cofactor.

Its subcellular location is the cytoplasm. The catalysed reaction is UDP-N-acetyl-alpha-D-muramate + NADP(+) = UDP-N-acetyl-3-O-(1-carboxyvinyl)-alpha-D-glucosamine + NADPH + H(+). The protein operates within cell wall biogenesis; peptidoglycan biosynthesis. Its function is as follows. Cell wall formation. In Flavobacterium johnsoniae (strain ATCC 17061 / DSM 2064 / JCM 8514 / BCRC 14874 / CCUG 350202 / NBRC 14942 / NCIMB 11054 / UW101) (Cytophaga johnsonae), this protein is UDP-N-acetylenolpyruvoylglucosamine reductase.